A 222-amino-acid chain; its full sequence is Latexin (222 aa).

The region spanning 1–97 (MEIPPTHYAA…NFTFEGEIGK (97 aa)) is the Cystatin LXN-type 1 domain. N6-acetyllysine is present on lysine 55. The alpha-helical linker stretch occupies residues 98-117 (NPDEEDNTFYQSLMSLKRPL). A Cystatin LXN-type 2 domain is found at 118 to 222 (EAQDIPDNFG…SRLPKEGQAE (105 aa)).

It belongs to the protease inhibitor I47 (latexin) family. As to expression, highly enriched in macrophages.

The protein localises to the cytoplasm. In terms of biological role, hardly reversible, non-competitive, and potent inhibitor of CPA1, CPA2 and CPA4. May play a role in inflammation. In Mus musculus (Mouse), this protein is Latexin (Lxn).